The chain runs to 2737 residues: Non-reducing polyketide synthase ATEG_07661 (2737 aa).

The tract at residues 75–245 is N-terminal acylcarrier protein transacylase domain (SAT); that stretch reads SRSLAELDSW…VRYDQTRATV (171 aa). Cys154 serves as the catalytic Nucleophile; for transacylase activity. The Proton donor/acceptor; for transacylase activity role is filled by His276. One can recognise a Ketosynthase family 3 (KS3) domain in the interval 427–854; sequence NEAIAIVGMS…GSNASMIITE (428 aa). Active-site for beta-ketoacyl synthase activity residues include Cys603, His738, and His777. A malonyl-CoA:ACP transacylase (MAT) region spans residues 969 to 1260; it reads FGGQVSRFVG…IMASRAIAQS (292 aa). The tract at residues 1368-1503 is N-terminal hotdog fold; sequence LQSLWNFVEF…ASVEMRAPTD (136 aa). The PKS/mFAS DH domain occupies 1368 to 1683; it reads LQSLWNFVEF…YGRVAKASMS (316 aa). Positions 1399 to 1681 are product template (PT) domain; sequence FVLSHVIAQT…VQYGRVAKAS (283 aa). The active-site Proton acceptor; for dehydratase activity is the His1403. The segment at 1535-1683 is C-terminal hotdog fold; the sequence is VEVLQGRNVY…YGRVAKASMS (149 aa). Asp1592 serves as the catalytic Proton donor; for dehydratase activity. The disordered stretch occupies residues 1724–1747; the sequence is SRTTKKKAKASKSKSSVKKDKAPS. Positions 1725–1739 are enriched in basic residues; sequence RTTKKKAKASKSKSS. Residues 1750-1824 form the Carrier domain; that stretch reads RDITDEVRNL…KFVACVSNAL (75 aa). Ser1784 is modified (O-(pantetheine 4'-phosphoryl)serine). The interval 1827–1876 is disordered; that stretch reads PNQGQSSIDEDDEDDEHSEDSSNESSSAASDEDASSGLESPDTGILTPED. Acidic residues predominate over residues 1834-1848; that stretch reads IDEDDEDDEHSEDSS. Over residues 1849 to 1866 the composition is skewed to low complexity; that stretch reads NESSSAASDEDASSGLES. The methyltransferase domain stretch occupies residues 2094–2270; it reads ADRIQSSSGS…GFGHVDWTDG (177 aa). The interval 2362–2665 is NADPH-binding domain; it reads VVLVTGATGS…IPFKDWISRV (304 aa).

It participates in secondary metabolite biosynthesis. Its function is as follows. Non-reducing polyketide synthase; part of the cluster B that mediates the biosynthesis of azasperpyranones, members of the azaphilone family that exhibit anti-cancer activities. Azasperpyranones are synthesized by 2 clusters, A and B. Cluster A is responsible for the production of the polyhydric phenol moiety while the azaphilonoid scaffold is produced by the cluster B. The non-reducing polyketide synthase ATEG_03629 produces 5-methyl orsellinic acid, which is then reduced to 5-methyl orsellinic aldehyde by the NRPS-like protein ATEG_03630. 5-methyl orsellinic aldehyde is then first hydroxylated by the FAD-dependent monooxygenase ATEG_03635 and subsequently hydroxylated by the cytochrome P450 monooxygenase ATEG_03631 to produce the unstable polyhydric phenol precursor of azasperpyranones. On the other hand, the polyketide synthase ATEG_07659 is responsible for producing the 3,5-dimethyloctadienone moiety from acetyl-CoA, three malonyl-CoA, and two S-adenosyl methionines (SAM). The 3,5-dimethyloctadienone moiety is then loaded onto the SAT domain of ATEG_07661 and extended with four malonyl-CoA and one SAM, which leads to the formation of 2,4-dihydroxy-6-(5,7-dimethyl-2-oxo-trans-3-trans-5-nonadienyl)-3-methylbenzaldehyde (compound 8) after reductive release and aldol condensation. The FAD-dependent monooxygenase ATEG_07662 is the next enzyme in the biosynthesis sequence and hydroxylates the side chain at the benzylic position of compound 8. In Aspergillus nidulans, afoF, the ortholog of the FAD-dependent oxygenase ATEG_07660, is the key enzyme for the biosynthesis of asperfuranone by catalyzing the hydroxylation at C-8 of to prevent the formation of a six-membered ring hemiacetal intermediate and thus facilitating the formation of a five-membered ring to produce asperfuranone. In Aspergillus terreus, ATEG_07660 is probably not functional, which leads to the formation of the six-membered ring hemiacetal intermediate presperpyranone instead of asperfuranone. Finally, ATEG_03636 is involved in the condensation of the polyhydric phenol moiety produced by cluster A and the perasperpyranone precursor produced by cluster B, to yield azasperpyranone A. Further modifications of azasperpyranone A result in the production of derivatives, including azasperpyranone B to F. This is Non-reducing polyketide synthase ATEG_07661 from Aspergillus terreus (strain NIH 2624 / FGSC A1156).